We begin with the raw amino-acid sequence, 352 residues long: 4-hydroxy-3-methylbut-2-en-1-yl diphosphate synthase (flavodoxin) (352 aa).

Residues cysteine 262, cysteine 265, cysteine 297, and glutamate 304 each coordinate [4Fe-4S] cluster.

This sequence belongs to the IspG family. The cofactor is [4Fe-4S] cluster.

The catalysed reaction is (2E)-4-hydroxy-3-methylbut-2-enyl diphosphate + oxidized [flavodoxin] + H2O + 2 H(+) = 2-C-methyl-D-erythritol 2,4-cyclic diphosphate + reduced [flavodoxin]. The protein operates within isoprenoid biosynthesis; isopentenyl diphosphate biosynthesis via DXP pathway; isopentenyl diphosphate from 1-deoxy-D-xylulose 5-phosphate: step 5/6. In terms of biological role, converts 2C-methyl-D-erythritol 2,4-cyclodiphosphate (ME-2,4cPP) into 1-hydroxy-2-methyl-2-(E)-butenyl 4-diphosphate. The protein is 4-hydroxy-3-methylbut-2-en-1-yl diphosphate synthase (flavodoxin) of Campylobacter concisus (strain 13826).